A 372-amino-acid chain; its full sequence is DNA replication and repair protein RecF (372 aa).

30–37 (GDNGQGKT) contributes to the ATP binding site.

The protein belongs to the RecF family.

Its subcellular location is the cytoplasm. In terms of biological role, the RecF protein is involved in DNA metabolism; it is required for DNA replication and normal SOS inducibility. RecF binds preferentially to single-stranded, linear DNA. It also seems to bind ATP. This is DNA replication and repair protein RecF from Ruminiclostridium cellulolyticum (strain ATCC 35319 / DSM 5812 / JCM 6584 / H10) (Clostridium cellulolyticum).